Consider the following 69-residue polypeptide: Amphipathic peptide CT2 (69 aa).

The N-terminal stretch at 1–23 is a signal peptide; sequence MKTQFVILIVAVVLLQLIANSEA. At F36 the chain carries Phenylalanine amide. Residues 40 to 69 constitute a propeptide that is removed on maturation; sequence GLRNLDNLDDDIFEPEMSEADLRYLQDLLR.

This sequence belongs to the non-disulfide-bridged peptide (NDBP) superfamily. Short antimicrobial peptide (group 4) family. As to expression, expressed by the venom gland.

The protein localises to the secreted. Its subcellular location is the target cell membrane. In terms of biological role, amphipathic peptide that shows antibacterial activities against both Gram-positive (MIC=10 uM, 20 uM and 20 uM against S.aureus, B.subtilis and S.agalactiae, respectively) and Gram-negative bacteria (MIC=20 uM, 10 uM, and 10 uM against E.coli, S.typhi, and P.aeruginosa, respectively). Is mildly hemolytic at its MIC range, but shows a strong cytotoxic activity at higher concentrations, reaching 84% lysis at 50 uM. The polypeptide is Amphipathic peptide CT2 (Vaejovis mexicanus smithi (Mexican scorpion)).